The chain runs to 1380 residues: DNA-directed RNA polymerase subunit beta (1380 aa).

Belongs to the RNA polymerase beta chain family. In terms of assembly, the RNAP catalytic core consists of 2 alpha, 1 beta, 1 beta' and 1 omega subunit. When a sigma factor is associated with the core the holoenzyme is formed, which can initiate transcription.

It carries out the reaction RNA(n) + a ribonucleoside 5'-triphosphate = RNA(n+1) + diphosphate. Functionally, DNA-dependent RNA polymerase catalyzes the transcription of DNA into RNA using the four ribonucleoside triphosphates as substrates. This Nitrobacter winogradskyi (strain ATCC 25391 / DSM 10237 / CIP 104748 / NCIMB 11846 / Nb-255) protein is DNA-directed RNA polymerase subunit beta.